The sequence spans 705 residues: Protein artemis (705 aa).

The residue at position 380 (T380) is a Phosphothreonine. S385 is subject to Phosphoserine. The span at 451–462 shows a compositional bias: acidic residues; it reads EESNSDSGEELE. Disordered stretches follow at residues 451–484, 535–569, and 638–675; these read EESN…NADP, PKLC…GWDS, and TLSG…AELP. Positions 546 to 559 are enriched in low complexity; the sequence is THISSQNSSQSTHI. A compositionally biased stretch (polar residues) spans 560–569; the sequence is TDQGSQGWDS. Low complexity predominate over residues 652–662; sequence SSTRADSQSSS. The residue at position 658 (S658) is a Phosphoserine; by ATM.

Belongs to the DNA repair metallo-beta-lactamase (DRMBL) family. Interacts with LIG4; the interaction is direct. Interacts with ATM. Interacts with BRCA1. Interacts with PRKDC. Interacts with TP53BP1. Also exhibits ATM- and phosphorylation-dependent interaction with the MRN complex, composed of MRE11, RAD50, and NBN. Phosphorylation on undefined residues by PRKDC may stimulate endonucleolytic activity on 5' and 3' hairpins and overhangs. PRKDC must remain present, even after phosphorylation, for efficient hairpin opening. Also phosphorylated by ATM in response to ionizing radiation (IR) and by ATR in response to ultraviolet (UV) radiation.

Its subcellular location is the nucleus. In terms of biological role, required for V(D)J recombination, the process by which exons encoding the antigen-binding domains of immunoglobulins and T-cell receptor proteins are assembled from individual V, (D), and J gene segments. V(D)J recombination is initiated by the lymphoid specific RAG endonuclease complex, which generates site specific DNA double strand breaks (DSBs). These DSBs present two types of DNA end structures: hairpin sealed coding ends and phosphorylated blunt signal ends. These ends are independently repaired by the non homologous end joining (NHEJ) pathway to form coding and signal joints respectively. This protein likely exhibits single-strand specific 5'-3' exonuclease activity in isolation, and may acquire endonucleolytic activity on 5' and 3' hairpins and overhangs when in a complex with PRKDC. The latter activity may be required specifically for the resolution of closed hairpins prior to the formation of the coding joint. May also be required for the repair of complex DSBs induced by ionizing radiation, which require substantial end-processing prior to religation by NHEJ. The sequence is that of Protein artemis (Dclre1c) from Mus musculus (Mouse).